Consider the following 1155-residue polypeptide: ATP-dependent helicase/deoxyribonuclease subunit B (1155 aa).

One can recognise a UvrD-like helicase ATP-binding domain in the interval 1 to 300 (MSLRFIVGRA…AHLEKYYFRH (300 aa)). 8–15 (GRAGSGKS) serves as a coordination point for ATP. The UvrD-like helicase C-terminal domain maps to 280-590 (TPVRFQKDSA…VVGTLERSRN (311 aa)). [4Fe-4S] cluster is bound by residues cysteine 792, cysteine 1111, cysteine 1114, and cysteine 1120.

Belongs to the helicase family. AddB/RexB type 1 subfamily. As to quaternary structure, heterodimer of AddA and AddB. Mg(2+) is required as a cofactor. The cofactor is [4Fe-4S] cluster.

Functionally, the heterodimer acts as both an ATP-dependent DNA helicase and an ATP-dependent, dual-direction single-stranded exonuclease. Recognizes the chi site generating a DNA molecule suitable for the initiation of homologous recombination. The AddB subunit has 5' -&gt; 3' nuclease activity but not helicase activity. The polypeptide is ATP-dependent helicase/deoxyribonuclease subunit B (Desulforamulus reducens (strain ATCC BAA-1160 / DSM 100696 / MI-1) (Desulfotomaculum reducens)).